A 403-amino-acid polypeptide reads, in one-letter code: cAMP-dependent protein kinase regulatory subunit (403 aa).

The tract at residues 1–155 (MADYTIPSEL…RIQASIGNNF (155 aa)) is dimerization and phosphorylation. A disordered region spans residues 79–125 (YAYSTDDGFGTEDDDDDDDDEDDEAAIPPPVVNRGRRTSVSAESMAP). Over residues 87–103 (FGTEDDDDDDDDEDDEA) the composition is skewed to acidic residues. Ser-117 bears the Phosphoserine mark. Residues 156–278 (LFRN…EEVP), Glu-226, Arg-235, 279–403 (LLSS…PGEH), Glu-349, and Arg-358 contribute to the 3',5'-cyclic AMP site.

This sequence belongs to the cAMP-dependent kinase regulatory chain family. In terms of assembly, tetramer, composed of 2 regulatory (R) and 2 catalytic (C) subunits. In the presence of cAMP it dissociates into 2 active monomeric C subunits and an R dimer that binds four cAMP molecules.

The protein is cAMP-dependent protein kinase regulatory subunit (PKAR) of Blastocladiella emersonii (Aquatic fungus).